Consider the following 87-residue polypeptide: MKTKLNELLEFPTSFTYKVMGQALPELVDQVVEVVQRHAPGDYSPTVKPSSKGNYHSVSITITATHIEQVETLYEELGNIDIVRMVL.

The protein belongs to the UPF0250 family.

In Enterobacter sp. (strain 638), this protein is UPF0250 protein Ent638_1166.